Consider the following 239-residue polypeptide: Ribulose-phosphate 3-epimerase (239 aa).

Ser-9 serves as a coordination point for substrate. 3 residues coordinate a divalent metal cation: His-34, Asp-36, and His-78. The Proton acceptor role is filled by Asp-36. Substrate-binding positions include His-78, 154–157 (GFGG), 183–185 (DGG), and 205–207 (GTS). Asp-183 provides a ligand contact to a divalent metal cation. The Proton donor role is filled by Asp-183.

The protein belongs to the ribulose-phosphate 3-epimerase family. Requires Co(2+) as cofactor. It depends on Fe(2+) as a cofactor. The cofactor is Mn(2+). Zn(2+) serves as cofactor.

The enzyme catalyses D-ribulose 5-phosphate = D-xylulose 5-phosphate. It participates in carbohydrate degradation; pentose phosphate pathway; D-xylulose 5-phosphate from D-ribulose 5-phosphate (non-oxidative stage): step 1/1. In terms of biological role, catalyzes the reversible epimerization of D-ribulose 5-phosphate to D-xylulose 5-phosphate. This chain is Ribulose-phosphate 3-epimerase (RPE1), found in Eremothecium gossypii (strain ATCC 10895 / CBS 109.51 / FGSC 9923 / NRRL Y-1056) (Yeast).